The sequence spans 236 residues: Phosphoribosylaminoimidazole-succinocarboxamide synthase (236 aa).

This sequence belongs to the SAICAR synthetase family.

The enzyme catalyses 5-amino-1-(5-phospho-D-ribosyl)imidazole-4-carboxylate + L-aspartate + ATP = (2S)-2-[5-amino-1-(5-phospho-beta-D-ribosyl)imidazole-4-carboxamido]succinate + ADP + phosphate + 2 H(+). Its pathway is purine metabolism; IMP biosynthesis via de novo pathway; 5-amino-1-(5-phospho-D-ribosyl)imidazole-4-carboxamide from 5-amino-1-(5-phospho-D-ribosyl)imidazole-4-carboxylate: step 1/2. The sequence is that of Phosphoribosylaminoimidazole-succinocarboxamide synthase from Campylobacter curvus (strain 525.92).